Here is a 182-residue protein sequence, read N- to C-terminus: Dual-action ribosomal maturation protein DarP (182 aa).

The interval 1-20 (MNKQPEEWQDPQSLQQQDDE) is disordered.

It belongs to the DarP family.

It localises to the cytoplasm. In terms of biological role, member of a network of 50S ribosomal subunit biogenesis factors which assembles along the 30S-50S interface, preventing incorrect 23S rRNA structures from forming. Promotes peptidyl transferase center (PTC) maturation. This Sodalis glossinidius (strain morsitans) protein is Dual-action ribosomal maturation protein DarP.